The primary structure comprises 114 residues: FK506-binding protein 1 (114 aa).

The residue at position 2 (Ser2) is an N-acetylserine. The region spanning 26 to 114 (GDLVTIHYTG…VFDVELLKVN (89 aa)) is the PPIase FKBP-type domain. Phosphoserine is present on Ser51.

Belongs to the FKBP-type PPIase family. FKBP1 subfamily. As to quaternary structure, interacts with HOM3; the interaction is direct, plays a role in feedback inhibition of aspartokinase by threonine, and is inhibited by tacrolimus and sirolimus. Interacts with HMO1. Interacts with FAP1.

The protein resides in the cytoplasm. The protein localises to the mitochondrion. The catalysed reaction is [protein]-peptidylproline (omega=180) = [protein]-peptidylproline (omega=0). Functionally, PPIases accelerate the folding of proteins. It catalyzes the cis-trans isomerization of proline imidic peptide bonds in oligopeptides. Plays a role in feedback inhibition of the pathway synthesizing the aspartate family of amino acids by binding to aspartokinase. This is FK506-binding protein 1 (FPR1) from Saccharomyces cerevisiae (strain ATCC 204508 / S288c) (Baker's yeast).